An 879-amino-acid polypeptide reads, in one-letter code: Band 4.1-like protein 1 (879 aa).

The disordered stretch occupies residues 1–64 (MTTETGPDSE…RPAEQSLDME (64 aa)). Positions 17–35 (ETPQQPEAAAAVTTPVTPA) are enriched in low complexity. Thr-30 is subject to Phosphothreonine. Residues 38–50 (SHPETNSNEKHLT) show a composition bias toward basic and acidic residues. Residue Ser-75 is modified to Phosphoserine. Thr-79 is modified (phosphothreonine). Residues 97–378 (ATCRVTLLDA…EHHTFFRLVS (282 aa)) form the FERM domain. Tyr-343 is subject to Phosphotyrosine. A phosphoserine mark is found at Ser-378, Ser-430, Ser-437, Ser-461, and Ser-466. Residues 428-501 (SRSLDGAEFS…HKQEFLDKPE (74 aa)) form a disordered region. Positions 444-501 (ENHDAGPDGDKREDDAESGGRRSEAEEGEVRTPTKIKELKPEQETTPRHKQEFLDKPE) are enriched in basic and acidic residues. Residue Thr-475 is modified to Phosphothreonine. A spectrin--actin-binding region spans residues 483–541 (KPEQETTPRHKQEFLDKPEDVLLKHQASINELKRTLKEPNSKLIHRDRDWERERRLPSS). The residue at position 510 (Ser-510) is a Phosphoserine. The segment covering 514 to 538 (LKRTLKEPNSKLIHRDRDWERERRL) has biased composition (basic and acidic residues). Disordered stretches follow at residues 514–596 (LKRT…FLKD), 633–687 (FEDF…STPE), and 718–742 (SRVS…MTTP). Residues Ser-540, Ser-541, Ser-544, and Ser-546 each carry the phosphoserine modification. Phosphothreonine is present on Thr-550. Residues 550-577 (TPEKASERAGLREGSEEKVKPPRPRAPE) show a composition bias toward basic and acidic residues. 2 positions are modified to phosphoserine: Ser-564 and Ser-578. Thr-580 is subject to Phosphothreonine. Phosphoserine occurs at positions 583, 587, 639, 648, 650, 665, 666, 669, 671, 677, and 684. Residues 635-650 (DFSRSLPELDRDKSDS) are compositionally biased toward basic and acidic residues. A Phosphothreonine modification is found at Thr-685. Over residues 718 to 728 (SRVSTADSTQV) the composition is skewed to polar residues. A phosphoserine mark is found at Ser-721, Pro-742, Ala-766, Ser-782, and Ser-868. The interval 744–879 (CITTETISTT…EERDKKPQES (136 aa)) is C-terminal (CTD).

Interacts with AGAP2. Highest expression in brain, lower in heart and kidney. Within the brain, highest expression in cerebellum.

The protein resides in the cytoplasm. The protein localises to the cytoskeleton. May function to confer stability and plasticity to neuronal membrane via multiple interactions, including the spectrin-actin-based cytoskeleton, integral membrane channels and membrane-associated guanylate kinases. The sequence is that of Band 4.1-like protein 1 from Rattus norvegicus (Rat).